Here is a 541-residue protein sequence, read N- to C-terminus: Glutamyl-tRNA(Gln) amidotransferase subunit B, mitochondrial (541 aa).

This sequence belongs to the GatB/GatE family. GatB subfamily. As to quaternary structure, subunit of the heterotrimeric GatFAB amidotransferase (AdT) complex, composed of A, B and F subunits.

Its subcellular location is the mitochondrion. It carries out the reaction L-glutamyl-tRNA(Gln) + L-glutamine + ATP + H2O = L-glutaminyl-tRNA(Gln) + L-glutamate + ADP + phosphate + H(+). Functionally, allows the formation of correctly charged Gln-tRNA(Gln) through the transamidation of misacylated Glu-tRNA(Gln) in the mitochondria. The reaction takes place in the presence of glutamine and ATP through an activated gamma-phospho-Glu-tRNA(Gln). This is Glutamyl-tRNA(Gln) amidotransferase subunit B, mitochondrial from Saccharomyces cerevisiae (strain YJM789) (Baker's yeast).